A 591-amino-acid polypeptide reads, in one-letter code: Putative F-box protein At1g32140 (591 aa).

The 48-residue stretch at 2–49 (TMMSDLSLDLVEEILCRVPITSLKAVRSSCKLWNVLSKNRILCKTEAR) folds into the F-box domain. Residues 567 to 581 (AGRKRKEKKTKRKSK) are compositionally biased toward basic residues. Residues 567-591 (AGRKRKEKKTKRKSKDKQMKLSNKV) are disordered.

The chain is Putative F-box protein At1g32140 from Arabidopsis thaliana (Mouse-ear cress).